Reading from the N-terminus, the 80-residue chain is Toxin-like peptide AaF1CA1 (80 aa).

Positions 1-22 are cleaved as a signal peptide; it reads MMKLVLFSVIVILFSLIGSIHG. The 56-residue stretch at 25-80 folds into the LCN-type CS-alpha/beta domain; that stretch reads VPGNYPLRPFRYRYGCAVPGDSDYCVRVCRKHGVRYGYCWFFTCWCEYLEDKNIKI. 3 disulfide bridges follow: Cys40/Cys63, Cys49/Cys68, and Cys53/Cys70.

This sequence belongs to the long (3 C-C) scorpion toxin superfamily. As to expression, expressed by the venom gland.

It localises to the secreted. Its function is as follows. Probable ion channel inhibitor. This Androctonus australis (Sahara scorpion) protein is Toxin-like peptide AaF1CA1.